Here is a 358-residue protein sequence, read N- to C-terminus: Uroporphyrinogen decarboxylase (358 aa).

Substrate-binding positions include 29–33 (RQAGR), Asp79, Tyr155, Ser210, and His330.

This sequence belongs to the uroporphyrinogen decarboxylase family. Homodimer.

Its subcellular location is the cytoplasm. It catalyses the reaction uroporphyrinogen III + 4 H(+) = coproporphyrinogen III + 4 CO2. It participates in porphyrin-containing compound metabolism; protoporphyrin-IX biosynthesis; coproporphyrinogen-III from 5-aminolevulinate: step 4/4. Catalyzes the decarboxylation of four acetate groups of uroporphyrinogen-III to yield coproporphyrinogen-III. The chain is Uroporphyrinogen decarboxylase from Bordetella petrii (strain ATCC BAA-461 / DSM 12804 / CCUG 43448).